Here is a 185-residue protein sequence, read N- to C-terminus: Large ribosomal subunit protein uL22 (185 aa).

This sequence belongs to the universal ribosomal protein uL22 family. Part of the 50S ribosomal subunit.

Its function is as follows. This protein binds specifically to 23S rRNA. It makes multiple contacts with different domains of the 23S rRNA in the assembled 50S subunit and ribosome. Functionally, the globular domain of the protein is located near the polypeptide exit tunnel on the outside of the subunit, while an extended beta-hairpin is found that lines the wall of the exit tunnel in the center of the 70S ribosome. This is Large ribosomal subunit protein uL22 from Pyrobaculum aerophilum (strain ATCC 51768 / DSM 7523 / JCM 9630 / CIP 104966 / NBRC 100827 / IM2).